A 707-amino-acid polypeptide reads, in one-letter code: Nucleolin (707 aa).

The tract at residues 1 to 308 is disordered; the sequence is MVKLAKAGKT…KVEGSEPTTP (308 aa). Lys-9, Lys-15, and Lys-16 each carry N6-acetyllysine. The segment covering 24–46 has biased composition (acidic residues); that stretch reads VEEDSEDEEMSEDEDDSSGEEEV. Phosphoserine occurs at positions 28, 34, 40, and 41. Residues 56-92 show a composition bias toward low complexity; the sequence is ATTTPAKKVVVSQTKKAAVPTPAKKAAVTPGKKAVAT. Repeat 1 spans residues 58 to 65; the sequence is TTPAKKVV. The interval 58 to 135 is 8 X 8 AA tandem repeats of X-T-P-X-K-K-X-X; that stretch reads TTPAKKVVVS…GAATPAKGAK (78 aa). Ser-67 carries the phosphoserine modification. 4 positions are modified to phosphothreonine: Thr-69, Thr-76, Thr-84, and Thr-92. 3 tandem repeats follow at residues 75–82, 83–90, and 91–98. Lys-96 bears the N6-acetyllysine mark. Thr-99 carries the post-translational modification Phosphothreonine. One copy of the 5; truncated repeat lies at 99-104; the sequence is TPAKVI. Lys-102 is modified (N6-acetyllysine). The stretch at 105–112 is repeat 6; sequence PTPGKKGA. Residue Thr-106 is modified to Phosphothreonine. N6-acetyllysine occurs at positions 109 and 116. Repeat copies occupy residues 120 to 127 and 128 to 135. Thr-121 carries the phosphothreonine modification. A compositionally biased stretch (low complexity) spans 121 to 137; that stretch reads TPGKKGAATPAKGAKNG. The residue at position 124 (Lys-124) is an N6-acetyllysine. Phosphoserine is present on residues Ser-145 and Ser-157. Residues 145-170 are compositionally biased toward acidic residues; that stretch reads SDEDEDEEDEDDSDEDEDDEEEDEFE. Low complexity predominate over residues 179–188; the sequence is PAKAAPAAPA. Ser-189 and Ser-212 each carry phosphoserine. Residues 189–217 show a composition bias toward acidic residues; the sequence is SEDEEDDEDEDDEEDDDEEEEDDSEEEVM. Thr-220 carries the post-translational modification Phosphothreonine. A compositionally biased stretch (acidic residues) spans 241–273; sequence EEEDDEEEDEDDEDEDDEEEDDEDDDEEEEEEE. Basic and acidic residues predominate over residues 286 to 302; it reads MTKQKEAPEAKKQKVEG. Residue Lys-299 forms a Glycyl lysine isopeptide (Lys-Gly) (interchain with G-Cter in SUMO1); alternate linkage. Lys-299 participates in a covalent cross-link: Glycyl lysine isopeptide (Lys-Gly) (interchain with G-Cter in SUMO2); alternate. Ser-303 carries the post-translational modification Phosphoserine. RRM domains lie at 309–385 and 395–468; these read FNLF…KPKG and RTLL…YTGE. The residue at position 320 (Lys-320) is an N6-acetyllysine. Lys-326 is covalently cross-linked (Glycyl lysine isopeptide (Lys-Gly) (interchain with G-Cter in SUMO1); alternate). A Glycyl lysine isopeptide (Lys-Gly) (interchain with G-Cter in SUMO2); alternate cross-link involves residue Lys-326. Residue Lys-350 is modified to N6-acetyllysine. Ser-358 bears the Phosphoserine mark. The residue at position 369 (Thr-369) is a Phosphothreonine. Lys-372 is covalently cross-linked (Glycyl lysine isopeptide (Lys-Gly) (interchain with G-Cter in SUMO2)). A Glycyl lysine isopeptide (Lys-Gly) (interchain with G-Cter in SUMO2); alternate cross-link involves residue Lys-379. Lys-379 bears the N6-acetyllysine; alternate mark. The residue at position 400 (Lys-400) is an N6-acetyllysine. Ser-403 is modified (phosphoserine). Position 407 is a phosphothreonine (Thr-407). An N6-acetyllysine mark is found at Lys-429 and Lys-446. 2 positions are modified to phosphoserine: Ser-460 and Ser-462. Lys-469 and Lys-478 each carry N6-acetyllysine. RRM domains follow at residues 487–561 and 569–644; these read KTLV…LQGS and KTLF…WAKP. Lys-514 is covalently cross-linked (Glycyl lysine isopeptide (Lys-Gly) (interchain with G-Cter in SUMO2); alternate). The residue at position 514 (Lys-514) is an N6-acetyllysine; alternate. Lys-522 and Lys-569 each carry N6-acetyllysine. Lys-574 participates in a covalent cross-link: Glycyl lysine isopeptide (Lys-Gly) (interchain with G-Cter in SUMO2); alternate. The residue at position 574 (Lys-574) is an N6-acetyllysine; alternate. Ser-577 bears the Phosphoserine mark. Lys-586 participates in a covalent cross-link: Glycyl lysine isopeptide (Lys-Gly) (interchain with G-Cter in SUMO1); alternate. A Glycyl lysine isopeptide (Lys-Gly) (interchain with G-Cter in SUMO2); alternate cross-link involves residue Lys-586. 2 positions are modified to phosphoserine: Ser-588 and Ser-616. Lys-621 is covalently cross-linked (Glycyl lysine isopeptide (Lys-Gly) (interchain with G-Cter in SUMO2)). Residues 639 to 707 form a disordered region; sequence LDWAKPKGEG…KPQGKKTKFE (69 aa). Lys-643 is modified (N6-acetyllysine). The segment covering 647 to 696 has biased composition (gly residues); it reads EGGFGGRGGGRGGFGGRGGGRGGRGGFGGRGRGGFGGRGGFRGGRGGGGD. An asymmetric dimethylarginine mark is found at Arg-653, Arg-657, Arg-663, Arg-667, Arg-670, Arg-676, Arg-678, Arg-684, and Arg-688. Arg-691 carries the asymmetric dimethylarginine; alternate modification. An Omega-N-methylarginine; alternate modification is found at Arg-691.

Identified in a IGF2BP1-dependent mRNP granule complex containing untranslated mRNAs. Component of the SWAP complex that consists of NPM1, NCL/nucleolin, PARP1 and SWAP70. Component of a complex which is at least composed of HTATSF1/Tat-SF1, the P-TEFb complex components CDK9 and CCNT1, RNA polymerase II, SUPT5H, and NCL/nucleolin. Interacts with AICDA. Interacts with APTX. Interacts with C1QBP. Interacts with ERBB4. Interacts (via C-terminus) with FMR1 isoform 6 (via N-terminus). Interacts with GZF1; this interaction is important for nucleolar localization of GZF1. Interacts with NSUN2. Interacts with NVL. Interacts (via N-terminus domain) with SETX. Interacts (via RRM1 and C-terminal RRM4/Arg/Gly-rich domains) with TERT; the interaction is important for nucleolar localization of TERT. Interacts with WDR46. Interacts with ZFP36. Interacts with LRRC34. Interacts with RRP1B. Interacts with HNRNPU; this interaction occurs during mitosis. Interacts with RIOK1; RIOK1 recruits NCL to PRMT5 for symmetrically methylation. Interacts with ZBTB7B. Interacts with MDK; this interaction promotes NCL clustering and lateral movements of this complex into lipid rafts leading to MDK internalization. Interacts with HDGF. Interacts with ALKBH2. Interacts with IGFBP5; this interaction is necessary for IGFBP5 localization to the nucleus. Interacts with DDX24 (when ubiquitinated); this interaction may be important during ribosome biogenesis. In terms of processing, some glutamate residues are glycylated by TTLL8. This modification occurs exclusively on glutamate residues and results in a glycine chain on the gamma-carboxyl group. Symmetrically methylated by PRMT5. Expressed in B-cells that have been induced to switch to various Ig isotypes.

It is found in the nucleus. It localises to the nucleolus. The protein resides in the cytoplasm. Functionally, nucleolin is the major nucleolar protein of growing eukaryotic cells. It is found associated with intranucleolar chromatin and pre-ribosomal particles. It induces chromatin decondensation by binding to histone H1. It is thought to play a role in pre-rRNA transcription and ribosome assembly. May play a role in the process of transcriptional elongation. Binds RNA oligonucleotides with 5'-UUAGGG-3' repeats more tightly than the telomeric single-stranded DNA 5'-TTAGGG-3' repeats. The protein is Nucleolin (Ncl) of Mus musculus (Mouse).